The sequence spans 591 residues: Aspartate--tRNA ligase (591 aa).

Position 173 (Glu-173) interacts with L-aspartate. The tract at residues 197–200 (QLFK) is aspartate. Position 219 (Arg-219) interacts with L-aspartate. ATP is bound by residues 219 to 221 (RDE) and Gln-228. His-448 serves as a coordination point for L-aspartate. ATP is bound at residue Glu-482. Arg-489 contributes to the L-aspartate binding site. Residue 534–537 (GLDR) participates in ATP binding.

This sequence belongs to the class-II aminoacyl-tRNA synthetase family. Type 1 subfamily. In terms of assembly, homodimer.

The protein localises to the cytoplasm. It carries out the reaction tRNA(Asp) + L-aspartate + ATP = L-aspartyl-tRNA(Asp) + AMP + diphosphate. Functionally, catalyzes the attachment of L-aspartate to tRNA(Asp) in a two-step reaction: L-aspartate is first activated by ATP to form Asp-AMP and then transferred to the acceptor end of tRNA(Asp). The sequence is that of Aspartate--tRNA ligase from Shewanella sp. (strain ANA-3).